We begin with the raw amino-acid sequence, 317 residues long: MRETPSVRSARDSWGITESVGATALGVAAARAAETAQADPLIRDEFAFLLVSAAGPTWAQMAVSDPHWLGADADARRIHEISRNYQAVRTHYFDEYFSDVAHAGIRQVVILAAGLDSRAFRLDWPAGTTVFEIDQPKVLEYKTATLDAHGAVAKARYVPVPADLRDDWPAALVEAGFDPAQPTAWLAEGLLPYLPADAQDRLFELVGVNSAPGSRIAVEAFNMSPERYTEERRAQRRARGEQMRKQLDLDIDVDALMYTADDRADAAQWLSEHGWQVEAVPSADEMARLGRPAAEADLAEFGMDGVLMRARLDGERL.

Residues aspartate 134 and 163–164 each bind S-adenosyl-L-methionine; that span reads DL.

The protein belongs to the UPF0677 family.

Exhibits S-adenosyl-L-methionine-dependent methyltransferase activity. The polypeptide is Putative S-adenosyl-L-methionine-dependent methyltransferase MSMEG_0093 (Mycolicibacterium smegmatis (strain ATCC 700084 / mc(2)155) (Mycobacterium smegmatis)).